The following is a 32-amino-acid chain: Enolase (32 aa).

Belongs to the enolase family. Homodimer. Requires Mg(2+) as cofactor.

It localises to the cytoplasm. The enzyme catalyses (2R)-2-phosphoglycerate = phosphoenolpyruvate + H2O. It participates in carbohydrate degradation; glycolysis; pyruvate from D-glyceraldehyde 3-phosphate: step 4/5. The protein is Enolase of Imperata cylindrica (Cogon grass).